Here is a 93-residue protein sequence, read N- to C-terminus: Small ribosomal subunit protein uS15 (93 aa).

Belongs to the universal ribosomal protein uS15 family. As to quaternary structure, part of the 30S ribosomal subunit. Forms a bridge to the 50S subunit in the 70S ribosome, contacting the 23S rRNA.

Its function is as follows. One of the primary rRNA binding proteins, it binds directly to 16S rRNA where it helps nucleate assembly of the platform of the 30S subunit by binding and bridging several RNA helices of the 16S rRNA. Forms an intersubunit bridge (bridge B4) with the 23S rRNA of the 50S subunit in the ribosome. This is Small ribosomal subunit protein uS15 from Ehrlichia chaffeensis (strain ATCC CRL-10679 / Arkansas).